The primary structure comprises 116 residues: Ribosome-binding factor A (116 aa).

Belongs to the RbfA family. Monomer. Binds 30S ribosomal subunits, but not 50S ribosomal subunits or 70S ribosomes.

It is found in the cytoplasm. One of several proteins that assist in the late maturation steps of the functional core of the 30S ribosomal subunit. Associates with free 30S ribosomal subunits (but not with 30S subunits that are part of 70S ribosomes or polysomes). Required for efficient processing of 16S rRNA. May interact with the 5'-terminal helix region of 16S rRNA. This Pediococcus pentosaceus (strain ATCC 25745 / CCUG 21536 / LMG 10740 / 183-1w) protein is Ribosome-binding factor A.